Reading from the N-terminus, the 55-residue chain is Large ribosomal subunit protein eL37 (55 aa).

The Zn(2+) site is built by Cys-20, Cys-23, Cys-35, and Cys-38. Residues 20-38 form a C4-type zinc finger; sequence CRRCGKNSYHKRHHRCSSC.

The protein belongs to the eukaryotic ribosomal protein eL37 family. It depends on Zn(2+) as a cofactor.

Binds to the 23S rRNA. This is Large ribosomal subunit protein eL37 from Cenarchaeum symbiosum (strain A).